The following is a 150-amino-acid chain: Galactose-binding lectin (150 aa).

The D-galactose site is built by His16 and Gly19. The N-linked (GlcNAc...) asparagine glycan is linked to Asn26. D-galactose-binding positions include Asp27, 35–37, His64, and Gly67; that span reads DIH. A glycan (N-linked (GlcNAc...) asparagine) is linked at Asn74. D-galactose is bound by residues Glu75, 83-85, His108, and Gly111; that span reads DRH. An N-linked (GlcNAc...) asparagine glycan is attached at Asn118. D-galactose contacts are provided by residues Glu119 and 127–129; that span reads DKH.

In terms of assembly, homodimer. Likely to form large oligomers; oligomerization enhances hemagglutination activity. In terms of processing, glycosylated.

Its activity is regulated as follows. Hemagglutination activity is not dependent on divalent cations. Hemagglutination activity is highly inhibited by D-galactose and N-acetyl-D-galactosamine, and to a lesser extent by raffinose. Also inhibited by melibiose and alpha-lactose, but not by beta-lactose or D-glucose. Functionally, D-galactose-binding lectin. Also binds N-acetyl-D-galactosamine. Has hemagglutination activity towards all types of human erythrocytes (O, A and B) and rabbit erythrocytes. Agglutinates Gram-negative and Gram-positive bacteria including E.coli DH5-alpha and L.plantarum ATCC8014, respectively, and has bacteriostatic activity against them. Also agglutinates M.lysodeikticus. May be involved in innate immunity by recognizing and eliminating pathogens. The sequence is that of Galactose-binding lectin from Mytilus californianus (California mussel).